A 283-amino-acid polypeptide reads, in one-letter code: Phosphatidylglycerol--prolipoprotein diacylglyceryl transferase (283 aa).

A run of 4 helical transmembrane segments spans residues 17 to 37, 56 to 76, 92 to 112, and 117 to 137; these read LAVRWYALSYILGFILFTFLG, FLTWGILGVIFGGRLGYVLFY, WEGGMSFHGGFLGVVIAIWLF, and GIGFLKLMDTVAPLVPLGLAS. Arg139 contributes to the a 1,2-diacyl-sn-glycero-3-phospho-(1'-sn-glycerol) binding site. 3 helical membrane-spanning segments follow: residues 194-214, 222-242, and 255-275; these read PSQLYQFALEGICLFAVVWLF, GQVASLFLGGYGIFRFIAEFA, and GLSMGQWLSVPMIVLGIVGFV.

Belongs to the Lgt family.

It localises to the cell inner membrane. The catalysed reaction is L-cysteinyl-[prolipoprotein] + a 1,2-diacyl-sn-glycero-3-phospho-(1'-sn-glycerol) = an S-1,2-diacyl-sn-glyceryl-L-cysteinyl-[prolipoprotein] + sn-glycerol 1-phosphate + H(+). The protein operates within protein modification; lipoprotein biosynthesis (diacylglyceryl transfer). Its function is as follows. Catalyzes the transfer of the diacylglyceryl group from phosphatidylglycerol to the sulfhydryl group of the N-terminal cysteine of a prolipoprotein, the first step in the formation of mature lipoproteins. This is Phosphatidylglycerol--prolipoprotein diacylglyceryl transferase from Neisseria meningitidis serogroup C (strain 053442).